A 1455-amino-acid chain; its full sequence is Cleavage and polyadenylation specificity factor subunit 1 (1455 aa).

The protein belongs to the CPSF1 family. As to quaternary structure, component of the cleavage and polyadenylation specificity factor (CPSF) complex, composed of at least Clp, Cpsf73, Cpsf100 and Cpsf160.

It localises to the nucleus. Its function is as follows. Component of the cleavage and polyadenylation specificity factor (CPSF) complex that plays a key role in pre-mRNA 3'-end formation, recognizing the AAUAAA signal sequence and interacting with poly(A) polymerase and other factors to bring about cleavage and poly(A) addition. This subunit is involved in the RNA recognition step of the polyadenylation reaction. This is Cleavage and polyadenylation specificity factor subunit 1 (Cpsf160) from Drosophila melanogaster (Fruit fly).